The sequence spans 126 residues: uncharacterized protein (126 aa).

The 108-residue stretch at 19 to 126 folds into the HIT domain; it reads IFERIIEGAV…LGGGLLGSIA (108 aa). The short motif at 111–115 is the Histidine triad motif element; the sequence is HLHIH.

This is an uncharacterized protein from Chlamydia muridarum (strain MoPn / Nigg).